The chain runs to 579 residues: XK-related protein 7 (579 aa).

Positions 1-18 (MAAKSDGAAASASPDPEG) are enriched in low complexity. The disordered stretch occupies residues 1-40 (MAAKSDGAAASASPDPEGAAGGARGSAGGRGEAAAAAGPP). A compositionally biased stretch (gly residues) spans 19–31 (AAGGARGSAGGRG). Transmembrane regions (helical) follow at residues 59–79 (WVLCALLVFFSDGATDLWLAA) and 89–109 (YFSLTLLFVLLPSLVVQLLSF). The tract at residues 146–165 (GAFRTKEGSPEPGPQPAPSS) is disordered. The next 5 helical transmembrane spans lie at 260 to 280 (LLPALSTSASLVSLAWTLASY), 314 to 334 (GLAFALFASVYKLYFGIFIVA), 355 to 375 (WEEIIYNMVVGIIYIFCWFNV), 384 to 404 (MTLYHCIVLLENAALTGFWYS), and 415 to 435 (LIMVCVVASSFALGIFFMCVY). The disordered stretch occupies residues 466–510 (ADAITSPPRSLPRTTGAERDGASAGERAGTPTPPVFQVRPGLPPT).

The protein belongs to the XK family.

It is found in the cell membrane. The protein is XK-related protein 7 of Homo sapiens (Human).